We begin with the raw amino-acid sequence, 335 residues long: Urokinase plasminogen activator surface receptor (335 aa).

Residues 1 to 22 form the signal peptide; sequence MGHPPLLPLLLLLHTCVPASWG. 3 UPAR/Ly6 domains span residues 23-114, 115-213, and 214-305; these read LRCM…RSRY, LECI…PQNG, and RQCY…YRSG. 3 disulfide bridges follow: C25-C46, C28-C34, and C39-C67. N-linked (GlcNAc...) asparagine glycosylation is present at N74. Disulfide bonds link C93–C98, C117–C144, C120–C127, C137–C169, C175–C192, C193–C198, C216–C244, C219–C227, C237–C263, C269–C287, and C288–C293. 4 N-linked (GlcNAc...) asparagine glycosylation sites follow: N184, N194, N222, and N255. The GPI-anchor amidated glycine moiety is linked to residue G305. A propeptide spans 306–335 (removed in mature form); the sequence is AAPQPGPAHLSLTITLLMTARLWGGTLLWT.

As to quaternary structure, monomer. Interacts with MRC2. Interacts (via the UPAR/Ly6 domains) with SRPX2. Interacts with FAP (seprase); the interaction occurs at the cell surface of invadopodia membrane. Interacts with SORL1 (via N-terminal ectodomain); this interaction decreases PLAUR internalization. The ternary complex composed of PLAUR-PLAU-SERPINE1 also interacts with SORL1. Interacts with CD82; this interaction prevents PLAUR from binding to its high affinity ligand PLAU. In terms of tissue distribution, expressed in neurons of the rolandic area of the brain (at protein level). Expressed in the brain.

The protein localises to the cell membrane. Its subcellular location is the cell projection. It is found in the invadopodium membrane. The protein resides in the secreted. In terms of biological role, acts as a receptor for urokinase plasminogen activator. Plays a role in localizing and promoting plasmin formation. Mediates the proteolysis-independent signal transduction activation effects of U-PA. It is subject to negative-feedback regulation by U-PA which cleaves it into an inactive form. This chain is Urokinase plasminogen activator surface receptor (PLAUR), found in Homo sapiens (Human).